Consider the following 512-residue polypeptide: mRNA export factor (512 aa).

Residues 1 to 15 are compositionally biased toward low complexity; it reads MATDIDMLIDLGLDL. A disordered region spans residues 1-243; the sequence is MATDIDMLID…APERKAPAAD (243 aa). The short motif at 5-17 is the Nuclear export signal element; the sequence is IDMLIDLGLDLSD. Phosphoserine; by host occurs at positions 16 and 18. Acidic residues-rich tracts occupy residues 16–26 and 35–51; these read SDSDLDEDPPE and LESD…EDME. An interaction with host ALYREF region spans residues 104–112; that stretch reads VWSRLGARR. Residues 110-138 carry the Nuclear localization signal motif; it reads ARRPSCSPEQHGGKVARLQPPPTKAQPAR. The residue at position 114 (Ser-114) is a Phosphoserine; by host. Arg-138 carries the dimethylated arginine; by host modification. The interval 138 to 152 is RGG-box; the sequence is RGGRRGRRRGRGRGG. Residues 139–149 are compositionally biased toward basic residues; sequence GGRRGRRRGRG. Omega-N-methylarginine; by host is present on Arg-148. Arg-150 is subject to Dimethylated arginine; by host. The segment covering 214 to 233 has biased composition (pro residues); that stretch reads APPPLMTLAIAPPPADPRAP. Residues Cys-400, His-479, Cys-483, and Cys-488 each contribute to the Zn(2+) site. Residues 400–488 form a CHC2-type zinc finger; the sequence is CYLKARGLCG…HRQECSSRVC (89 aa). Residues 500–512 form an important for homodimerization region; that stretch reads YVHGKYFYCNSLF.

It belongs to the HHV-1 ICP27 protein family. As to quaternary structure, homodimer. Interacts with host RBP1; this interaction facilitates the RNA polymerase recruitment to viral transcription sites. Interacts (via the RGG box) with host ALYREF/THOC4; this interaction recruits ALYREF to viral replication compartments and probably directs viral mRNA to the TAP/NFX1 pathway. Interacts with host ALYREF2. Interacts (via the RGG box) with host SRPK1; this interaction relocalizes SRPK1 to the nucleus and seems to alter its activity. Interacts with ICP4; this interaction modulates ICP4 DNA-binding activity. Interacts with host NXF1; this interaction allows efficient export of HHV-1 early and late transcripts. Post-translationally, methylated within the RGG box possibly by host PRMT1. When hypomethylated, ICP27 is exported to the cytoplasm earlier and more rapidly. Phosphorylated.

Its subcellular location is the host cytoplasm. The protein resides in the host nucleus. Functionally, multifunctional regulator of the expression of viral genes that contributes to the shutoff of host protein synthesis and mediates nuclear export of viral intronless mRNAs. Early in infection, this immediate early (EI) protein mediates the inhibition of cellular splicing. This results in the accumulation of unprocessed 3'end pre-mRNAs which can't be exported from the nucleus. Cellular protein synthesis is thereby shut off early after virus infection. Later in the infection, it helps recruit cellular RNA polymerase II to viral replication sites and promotes the nuclear export of viral intronless mRNAs by interacting with mRNAs and host NXF1/TAP. ICP27 binds to NUP62 which may provide facilitated viral mRNA export and may indirectly compete with some host cell transport receptors for binding and inhibit cellular nucleocytoplasmic transport pathways. Also stimulates translation of viral transcripts. Repression of host gene expression blocks the cell cycle at the G1 phase and prevents apoptosis. Seems to silence the 3' splice site of the promyelocytic leukemia (PML) intron 7a, thereby switching PML isoforms from PML-II to PML-V. This could be linked to the accelerated mRNA export induced by ICP27 which might not provide sufficient time for PML pre-mRNA to be spliced in the nucleus. This is mRNA export factor from Homo sapiens (Human).